Reading from the N-terminus, the 117-residue chain is Large ribosomal subunit protein bL20 (117 aa).

This sequence belongs to the bacterial ribosomal protein bL20 family.

Binds directly to 23S ribosomal RNA and is necessary for the in vitro assembly process of the 50S ribosomal subunit. It is not involved in the protein synthesizing functions of that subunit. This is Large ribosomal subunit protein bL20 from Trichlorobacter lovleyi (strain ATCC BAA-1151 / DSM 17278 / SZ) (Geobacter lovleyi).